The following is a 937-amino-acid chain: Protein translocase subunit SecA (937 aa).

Residues Gln-86, 104-108 (GEGKT), and Asp-493 each bind ATP. The tract at residues 868–889 (LERPSQPTKLAYSAPSEDGDAE) is disordered. Cys-911, Cys-913, Cys-922, and His-923 together coordinate Zn(2+). The tract at residues 915–937 (SGKKFKQCHGRPGGPTGLTARVS) is disordered.

Belongs to the SecA family. As to quaternary structure, monomer and homodimer. Part of the essential Sec protein translocation apparatus which comprises SecA, SecYEG and auxiliary proteins SecDF. Other proteins may also be involved. Requires Zn(2+) as cofactor.

Its subcellular location is the cell membrane. The protein localises to the cytoplasm. The enzyme catalyses ATP + H2O + cellular proteinSide 1 = ADP + phosphate + cellular proteinSide 2.. In terms of biological role, part of the Sec protein translocase complex. Interacts with the SecYEG preprotein conducting channel. Has a central role in coupling the hydrolysis of ATP to the transfer of proteins into and across the cell membrane, serving as an ATP-driven molecular motor driving the stepwise translocation of polypeptide chains across the membrane. The sequence is that of Protein translocase subunit SecA from Nocardioides sp. (strain ATCC BAA-499 / JS614).